Here is a 128-residue protein sequence, read N- to C-terminus: Fluoride-specific ion channel FluC (128 aa).

A run of 4 helical transmembrane segments spans residues 5–25, 35–55, 67–87, and 96–116; these read IVAI…LSIG, LGTL…VVAF, LFVI…SVEV, and FGWA…LTGL. Positions 75 and 78 each coordinate Na(+).

The protein belongs to the fluoride channel Fluc/FEX (TC 1.A.43) family.

It is found in the cell inner membrane. It carries out the reaction fluoride(in) = fluoride(out). Its activity is regulated as follows. Na(+) is not transported, but it plays an essential structural role and its presence is essential for fluoride channel function. Functionally, fluoride-specific ion channel. Important for reducing fluoride concentration in the cell, thus reducing its toxicity. The chain is Fluoride-specific ion channel FluC from Burkholderia pseudomallei (strain 1106a).